The sequence spans 239 residues: MTTGDLVNIHPTELKFPFELKKQSSCSMQLTNKTTTQCVAFKVKTTNPRKYCVRPNTGVVLPGDSCNVTVTMQAQKEAPLDMQCKDKFLVQTVVVSDGTTSKEVLAEMFNKEAGRVIEDFKLRVVYIPANPPSPVPEGSEEGNSPMASLNDIASQSASLFDDVSRTFEETSEKSSEAWSMISKLTEEKTSATQQSQKLRLELEMLRKETSKKQSGGHSLLLMLLVGLLGCVIGYLLNRI.

Met1 bears the N-acetylmethionine mark. N-acetylthreonine; in Vesicle-associated protein 1-3, N-terminally processed is present on Thr2. At 2–215 (TTGDLVNIHP…RKETSKKQSG (214 aa)) the chain is on the cytoplasmic side. The MSP domain maps to 6–127 (LVNIHPTELK…EDFKLRVVYI (122 aa)). Residues Ser133 and Ser164 each carry the phosphoserine modification. The stretch at 179-214 (SMISKLTEEKTSATQQSQKLRLELEMLRKETSKKQS) forms a coiled coil. A helical; Anchor for type IV membrane protein membrane pass occupies residues 216 to 236 (GHSLLLMLLVGLLGCVIGYLL).

The protein belongs to the VAMP-associated protein (VAP) (TC 9.B.17) family.

The protein resides in the endoplasmic reticulum membrane. May play a role in vesicle trafficking. The chain is Vesicle-associated protein 1-3 (PVA13) from Arabidopsis thaliana (Mouse-ear cress).